The primary structure comprises 468 residues: 3-isopropylmalate dehydratase large subunit (468 aa).

[4Fe-4S] cluster is bound by residues Cys347, Cys407, and Cys410.

This sequence belongs to the aconitase/IPM isomerase family. LeuC type 1 subfamily. In terms of assembly, heterodimer of LeuC and LeuD. It depends on [4Fe-4S] cluster as a cofactor.

It carries out the reaction (2R,3S)-3-isopropylmalate = (2S)-2-isopropylmalate. The protein operates within amino-acid biosynthesis; L-leucine biosynthesis; L-leucine from 3-methyl-2-oxobutanoate: step 2/4. Catalyzes the isomerization between 2-isopropylmalate and 3-isopropylmalate, via the formation of 2-isopropylmaleate. The chain is 3-isopropylmalate dehydratase large subunit from Campylobacter jejuni (strain RM1221).